Reading from the N-terminus, the 1930-residue chain is Transport and Golgi organization protein 1 homolog (1930 aa).

The signal sequence occupies residues 1–24 (MAAAPGLLFWLFVLGALWWVPGQS). Residues 25-1171 (DLSHGRRFSD…EPAAVPPLES (1147 aa)) are Lumenal-facing. Residues 45-107 (MLMYRGKALE…PKDLIKVLHK (63 aa)) enclose the SH3 domain. 5 disordered regions span residues 144 to 263 (LELE…REKT), 317 to 496 (EEEE…AAEK), 547 to 737 (LGSS…MNSQ), 754 to 891 (TKQP…TPEI), and 1018 to 1149 (TAPL…PVGA). The segment covering 152–189 (EESKKAEEVSQHREKSPEESRGRELDPVPEPEAFRADS) has biased composition (basic and acidic residues). Positions 197 to 211 (SESTEGLQGQPSAQE) are enriched in polar residues. Serine 229 is subject to Phosphoserine. Positions 247 to 256 (ESRTGNSSPA) are enriched in polar residues. Residues 317–330 (EEEEEVEEDADSSD) are compositionally biased toward acidic residues. Over residues 338–368 (SDKDEKVPGKPMIEKYLTDKDPNLSEEDKVE) the composition is skewed to basic and acidic residues. Residue asparagine 360 is glycosylated (N-linked (GlcNAc...) asparagine). The span at 420–430 (DSEDEGDDLFV) shows a compositional bias: acidic residues. 2 stretches are compositionally biased toward basic and acidic residues: residues 431–442 (EEPKTNDVKDSE) and 451–461 (GEEKDIQESRK). A glycan (N-linked (GlcNAc...) asparagine) is linked at asparagine 631. Residues 661 to 677 (EDGTDAEQARAIRRPQE) show a composition bias toward basic and acidic residues. A compositionally biased stretch (acidic residues) spans 692 to 701 (DEEEEEEEGD). The segment covering 715–726 (VSAQQSRENSPS) has biased composition (polar residues). A compositionally biased stretch (basic and acidic residues) spans 791–800 (EESHLADMRA). Serine 856 is subject to Phosphoserine. The segment covering 1030–1039 (GWARPGEERQ) has biased composition (basic and acidic residues). Polar residues-rich tracts occupy residues 1040 to 1054 (PPQQ…TGDL) and 1115 to 1127 (QPVT…SEVS). Positions 1128–1137 (QKPDTKKDID) are enriched in basic and acidic residues. An intramembrane segment occupies 1172–1192 (AFGSLYAFILYLSKMLLATLP). Over 1193-1202 (DNVQPGPDFY) the chain is Lumenal. The helical transmembrane segment at 1203 to 1223 (GLPWQPVIITAVLGIVSFAIF) threads the bilayer. Residues 1224–1930 (SWRTILVVKS…DRSQASKPTP (707 aa)) lie on the Cytoplasmic side of the membrane. Coiled coils occupy residues 1236–1329 (YQVT…KNQD) and 1359–1422 (LNEA…EIAL). Positions 1238 to 1677 (VTEKQISEKL…VIVKPMPGRP (440 aa)) are mediates interaction with MIA2. The tract at residues 1447–1472 (ESEDPDKGGNESDDLANGETGGDRSE) is disordered. Position 1458 is a phosphoserine (serine 1458). The stretch at 1514–1662 (NLEDQIKKLE…LLEMTQKMAM (149 aa)) forms a coiled coil. 3 disordered regions span residues 1669 to 1796 (IVKP…VPLM), 1801 to 1820 (PPPI…FGPR), and 1840 to 1930 (APGV…KPTP). Polar residues predominate over residues 1677 to 1694 (PNTQNPPRRGLLSQNGSF). 2 positions are modified to phosphoserine: serine 1693 and serine 1705. Residues 1706–1715 (PPLPAEPPGR) show a composition bias toward pro residues. Residues 1722–1738 (SRRDTPRSEFGSLDRHL) are compositionally biased toward basic and acidic residues. Residues serine 1733, serine 1754, serine 1766, and serine 1770 each carry the phosphoserine modification. Residues 1760-1773 (PVVNSSSRSSSPAK) show a composition bias toward low complexity. The interval 1776-1930 (DEGKVNMAPK…DRSQASKPTP (155 aa)) is proline-rich domain (PRD); mediates interaction with the COPII coat subunits SEC23A and SEC23B. Pro residues predominate over residues 1801–1811 (PPPIRYGPPPQ). Asymmetric dimethylarginine is present on arginine 1805. The SEC16A-interacting region (SIR); required for its localization to endoplasmic reticulum exit sites and for its interaction with SEC16A stretch occupies residues 1809-1869 (PPQLCGGPFG…GHTPFRPPGS (61 aa)). A compositionally biased stretch (basic and acidic residues) spans 1846–1858 (GKRDLPLDPREFL). The segment covering 1881-1898 (RLPPPTHGPQEYPPPPPA) has biased composition (pro residues). The residue at position 1915 (serine 1915) is a Phosphoserine. A compositionally biased stretch (polar residues) spans 1915-1930 (SPSSVQDRSQASKPTP).

Belongs to the MIA/OTOR family. Tango1 subfamily. In terms of assembly, interacts with MIA2. Interacts (via SH3 domain) with COL7A1. Interacts with the COPII coat subunits SEC23A, SEC23B and maybe SEC24C. May interact with APOB and MIA2. Interacts with SEC16A.

Its subcellular location is the endoplasmic reticulum membrane. Functionally, plays a role in the transport of cargos that are too large to fit into COPII-coated vesicles and require specific mechanisms to be incorporated into membrane-bound carriers and exported from the endoplasmic reticulum. This protein is required for collagen VII (COL7A1) secretion by loading COL7A1 into transport carriers. It may participate in cargo loading of COL7A1 at endoplasmic reticulum exit sites by binding to COPII coat subunits Sec23/24 and guiding SH3-bound COL7A1 into a growing carrier. Does not play a role in global protein secretion and is apparently specific to COL7A1 cargo loading. However, it may participate in secretion of other proteins in cells that do not secrete COL7A1. It is also specifically required for the secretion of lipoproteins by participating in their export from the endoplasmic reticulum. Required for correct assembly of COPII coat components at endoplasmic reticulum exit sites (ERES) and for the localization of SEC16A and membrane-bound ER-resident complexes consisting of MIA2 and PREB/SEC12 to ERES. The chain is Transport and Golgi organization protein 1 homolog from Mus musculus (Mouse).